The chain runs to 29 residues: Cytochrome b6-f complex subunit 8 (29 aa).

A helical transmembrane segment spans residues 3–23 (ILSISWAFLMVVFTFSLSLVV).

The protein belongs to the PetN family. As to quaternary structure, the 4 large subunits of the cytochrome b6-f complex are cytochrome b6, subunit IV (17 kDa polypeptide, PetD), cytochrome f and the Rieske protein, while the 4 small subunits are PetG, PetL, PetM and PetN. The complex functions as a dimer.

The protein resides in the plastid. Its subcellular location is the chloroplast thylakoid membrane. Its function is as follows. Component of the cytochrome b6-f complex, which mediates electron transfer between photosystem II (PSII) and photosystem I (PSI), cyclic electron flow around PSI, and state transitions. In Chara vulgaris (Common stonewort), this protein is Cytochrome b6-f complex subunit 8.